Here is a 132-residue protein sequence, read N- to C-terminus: Interleukin-4 (132 aa).

An N-terminal signal peptide occupies residues 1–24 (MGLTSQLIPTLVCLLALTSTFVHG). Residues Asn28, Asn45, Asn62, and Asn101 are each glycosylated (N-linked (GlcNAc...) asparagine). Intrachain disulfides connect Cys48–Cys84 and Cys70–Cys104.

The protein belongs to the IL-4/IL-13 family.

It is found in the secreted. Participates in at least several B-cell activation processes as well as of other cell types. It is a costimulator of DNA-synthesis. It induces the expression of class II MHC molecules on resting B-cells. It enhances both secretion and cell surface expression of IgE and IgG1. It also regulates the expression of the low affinity Fc receptor for IgE (CD23) on both lymphocytes and monocytes. Positively regulates IL31RA expression in macrophages. Stimulates autophagy in dendritic cells by interfering with mTORC1 signaling and through the induction of RUFY4. The polypeptide is Interleukin-4 (IL4) (Ailuropoda melanoleuca (Giant panda)).